Consider the following 710-residue polypeptide: Adenylosuccinate synthetase (710 aa).

Disordered regions lie at residues 1–57 (MPVR…NHAK) and 82–112 (MDDE…SAQC). Residues 11–25 (NNSSSGVSNALSSSS) are compositionally biased toward low complexity. The segment covering 32 to 43 (SPSSRENSTPLS) has biased composition (polar residues). GTP is bound by residues 180-186 (GDEGKGK) and 210-212 (GHT). Catalysis depends on D181, which acts as the Proton acceptor. D181 and G210 together coordinate Mg(2+). IMP-binding positions include 181-184 (DEGK), 208-211 (NAGH), T295, K309, Q421, T437, and K567. The active-site Proton donor is H211. Position 563-569 (563-569 (AVTKKPR)) interacts with substrate. GTP is bound by residues R569 and 697 to 699 (GNG).

The protein belongs to the adenylosuccinate synthetase family. In terms of assembly, homodimer. The cofactor is Mg(2+).

Its subcellular location is the cytoplasm. The enzyme catalyses IMP + L-aspartate + GTP = N(6)-(1,2-dicarboxyethyl)-AMP + GDP + phosphate + 2 H(+). The protein operates within purine metabolism; AMP biosynthesis via de novo pathway; AMP from IMP: step 1/2. Its function is as follows. Plays an important role in the salvage pathway for purine nucleotide biosynthesis. Catalyzes the first committed step in the biosynthesis of AMP from IMP. In Leishmania braziliensis, this protein is Adenylosuccinate synthetase.